Reading from the N-terminus, the 324-residue chain is Beta-ketoacyl-[acyl-carrier-protein] synthase III (324 aa).

Active-site residues include C113 and H251. Positions 252 to 256 are ACP-binding; sequence QANKR. The active site involves N281.

Belongs to the thiolase-like superfamily. FabH family. As to quaternary structure, homodimer.

It localises to the cytoplasm. The catalysed reaction is malonyl-[ACP] + acetyl-CoA + H(+) = 3-oxobutanoyl-[ACP] + CO2 + CoA. Its pathway is lipid metabolism; fatty acid biosynthesis. Functionally, catalyzes the condensation reaction of fatty acid synthesis by the addition to an acyl acceptor of two carbons from malonyl-ACP. Catalyzes the first condensation reaction which initiates fatty acid synthesis and may therefore play a role in governing the total rate of fatty acid production. Possesses both acetoacetyl-ACP synthase and acetyl transacylase activities. Its substrate specificity determines the biosynthesis of branched-chain and/or straight-chain of fatty acids. This Bartonella tribocorum (strain CIP 105476 / IBS 506) protein is Beta-ketoacyl-[acyl-carrier-protein] synthase III.